Reading from the N-terminus, the 1679-residue chain is AF4/FMR2 family member lilli (1679 aa).

Disordered stretches follow at residues 1–21, 55–78, 124–305, 406–539, 580–609, 733–755, 783–1172, and 1197–1319; these read MAQQ…SSIN, NYNM…QQGI, RSAP…EKDV, LHQL…GAQN, MGAG…SNKW, DSGT…AVGG, QPTQ…TTPH, and TPAQ…LQIG. Basic and acidic residues predominate over residues 69 to 78; it reads REKIERQQGI. Composition is skewed to low complexity over residues 144-181 and 212-244; these read SLGH…QQQQ and PSSS…SSGG. A Phosphothreonine modification is found at T421. Basic and acidic residues predominate over residues 429–442; it reads LKTEKNHSLEKQDS. Over residues 444-455 the composition is skewed to acidic residues; it reads LENDLELSESED. Phosphoserine is present on residues S451 and S453. Residues 464-484 are compositionally biased toward low complexity; sequence SAGNSSNSSESDSSESGSESS. Over residues 492 to 501 the composition is skewed to basic residues; it reads HPNHQQHHHQ. Low complexity predominate over residues 502–532; the sequence is LQQQQQQQQQQASMQQQQVLQQQQQHRPQPL. The segment covering 582-591 has biased composition (gly residues); that stretch reads AGSGSGGTLS. A compositionally biased stretch (polar residues) spans 598 to 609; the sequence is NKTPSPTESNKW. Low complexity predominate over residues 733–752; it reads DSGTSASGSSSSSSSSSDSA. The span at 783-796 shows a compositional bias: polar residues; sequence QPTQSQKAPPSNSV. A compositionally biased stretch (basic residues) spans 810–820; that stretch reads QRQKKPRKKKA. Phosphoserine is present on residues S829 and S830. Positions 859 to 871 form a DNA-binding region, a.T hook; sequence KKGRGRPRKQQQS. Positions 868-906 are enriched in low complexity; that stretch reads QQQSGGSGNLSSASAGSSSQTKGPTLTAAKKPLAKTPLA. S879 and S881 each carry phosphoserine. Polar residues predominate over residues 917 to 927; it reads SQSSSNGNTPT. Composition is skewed to low complexity over residues 957 to 973 and 1001 to 1012; these read SSSA…SSSS and GSGSSSPSSSGS. Residues 1019 to 1030 show a composition bias toward polar residues; that stretch reads TRSQVGSGQALA. Over residues 1042–1068 the composition is skewed to low complexity; sequence SQHSQHLSSSECSSSSGGCTAVCSSSS. A compositionally biased stretch (basic and acidic residues) spans 1073–1090; the sequence is EGRREKERERKPKSDKNK. The span at 1130-1140 shows a compositional bias: pro residues; sequence QPPPPQAPPAA. Residues 1198 to 1213 are compositionally biased toward polar residues; sequence PAQQNGHLTPKDQATN. 2 stretches are compositionally biased toward basic and acidic residues: residues 1234–1251 and 1260–1288; these read EHPV…EAKF and FQLK…EQPP. S1368 carries the post-translational modification Phosphoserine. T1370 bears the Phosphothreonine mark. Residues 1569 to 1589 are compositionally biased toward low complexity; sequence GNTPSSISPSNSVGSQGSGSN. Positions 1569–1594 are disordered; sequence GNTPSSISPSNSVGSQGSGSNTPPGR.

This sequence belongs to the AF4 family.

Its subcellular location is the nucleus. Its function is as follows. Has a role in transcriptional regulation. Acts in parallel with the Ras/MAPK and the PI3K/PKB pathways in the control of cell identity and cellular growth. Essential for regulation of the cytoskeleton and cell growth but not for cell proliferation or growth rate. Required specifically for the microtubule-based basal transport of lipid droplets. Plays a partially redundant function downstream of Raf in cell fate specification in the developing eye. Pair-rule protein that regulates embryonic cellularization, gastrulation and segmentation. This is AF4/FMR2 family member lilli from Drosophila erecta (Fruit fly).